A 6077-amino-acid chain; its full sequence is Nonribosomal peptide synthetase nlsA (6077 aa).

The tract at residues 417 to 618 is adenylation 1; it reads VFAYAPLIHG…LGRKDSQIKL (202 aa). Positions 751-827 constitute a Carrier 1 domain; that stretch reads HSEVTVEDRL…DLVTRVQEIK (77 aa). Serine 788 is subject to O-(pantetheine 4'-phosphoryl)serine. Condensation regions lie at residues 842 to 1267 and 1309 to 1737; these read LSPI…GKRL and EDIY…KQRI. Adenylation regions lie at residues 1757–2149 and 2755–3157; these read QEKM…YLGE and DRVI…QVKL. In terms of domain architecture, Carrier 2 spans 3297 to 3373; it reads AVERAAESTL…DMAKCCDDTE (77 aa). Serine 3334 bears the O-(pantetheine 4'-phosphoryl)serine mark. The tract at residues 3524-3779 is condensation 3; it reads DSRYRQCLYK…LLSVPRDSLM (256 aa). Positions 3816–4213 are adenylation 4; that stretch reads ENAIMHPQAT…LGRKDHQVKL (398 aa). Positions 4361–4437 constitute a Carrier 3 domain; it reads REGDATPAII…ELAVSCGTKP (77 aa). O-(pantetheine 4'-phosphoryl)serine is present on serine 4398. Condensation regions lie at residues 4451–4869 and 4916–5260; these read PLSP…RVLE and VEDI…EDKT. A Carrier 4 domain is found at 5334–5410; the sequence is RAPNDSEKQL…NMMALINDRK (77 aa). Serine 5371 is modified (O-(pantetheine 4'-phosphoryl)serine). Positions 5476-5885 are condensation 6; the sequence is DVLPVTDFQA…SLVANPNVAL (410 aa). The region spanning 5921–6004 is the Carrier 5 domain; sequence SEILVHSDLI…GHMAVLALNM (84 aa). Residues 6013–6027 show a composition bias toward low complexity; that stretch reads DSDAAPAPAYAPVDA. The interval 6013-6047 is disordered; the sequence is DSDAAPAPAYAPVDARASRNVSTSRQQQEGLPLPA. Polar residues predominate over residues 6031–6041; that stretch reads RNVSTSRQQQE.

It belongs to the NRP synthetase family.

The protein operates within secondary metabolite biosynthesis. Functionally, nonribosomal peptide synthetase involved in the synthesis of nidulanin A and derived compounds. Nidulanin A is a tetracyclopeptide with the sequence L-Phe-L-Kyn-L-Val-D-Val and an isoprene unit N-linked to the amino group of L-kynurenine. The NRPS nlsA is responsible of the synthesis of the cyclopeptide and the prenyltransferase nptA adds the isoprene unit on the L-kynurenine residue of nidulanin A. Further modifications lead to additional oxygenated related compounds. This chain is Nonribosomal peptide synthetase nlsA, found in Emericella nidulans (strain FGSC A4 / ATCC 38163 / CBS 112.46 / NRRL 194 / M139) (Aspergillus nidulans).